A 601-amino-acid chain; its full sequence is Elongation factor 4 (601 aa).

The tr-type G domain occupies 6 to 188 (QCIRNFSIIA…AVVAKVPPPQ (183 aa)). GTP contacts are provided by residues 18–23 (DHGKST) and 135–138 (NKID).

It belongs to the TRAFAC class translation factor GTPase superfamily. Classic translation factor GTPase family. LepA subfamily.

It is found in the cell membrane. It catalyses the reaction GTP + H2O = GDP + phosphate + H(+). Functionally, required for accurate and efficient protein synthesis under certain stress conditions. May act as a fidelity factor of the translation reaction, by catalyzing a one-codon backward translocation of tRNAs on improperly translocated ribosomes. Back-translocation proceeds from a post-translocation (POST) complex to a pre-translocation (PRE) complex, thus giving elongation factor G a second chance to translocate the tRNAs correctly. Binds to ribosomes in a GTP-dependent manner. This is Elongation factor 4 from Desulfitobacterium hafniense (strain DSM 10664 / DCB-2).